A 384-amino-acid polypeptide reads, in one-letter code: MTWTSGQLQREKQARPGSGAVLAFPDDKDLRVYGPAESQSAVFGDVCPLLTSLLDGYNVCVMAYGQTGSGKSYTMLGRHSDDGPVLPLDPQSDLGIIPRVAEELFRLILENTSRSPKVEVSIVEVYNNDIFDLLAKDSIAAVSGVKREVVTAKDGRTEVALLASEAVGSASKLMELVHGGLQLRAKHPTLVHADSSRSHLIITVTLTTASCSDSTADQACSATLPREQTEAGRAGRSRRASQGALAPQLVPGNPAGHAEQVQARLQLVDSAGSECVGVSGVTGLALREMACISRSLAALAGVLGALLEHRGHAPYRNSRLTHLLQDCLGGDAKLLVILCISPSQRHLAQTLQGLGFGIRARQVQRGPARKKPPSSQTEGKRRPD.

The interval Met1–Ala20 is disordered. The region spanning Gln7–Val363 is the Kinesin motor domain. Gly65 to Ser72 contacts ATP. Disordered regions lie at residues Asp217–Gly256 and Gln362–Asp384.

Belongs to the TRAFAC class myosin-kinesin ATPase superfamily. Kinesin family. Homotetramer.

It localises to the cytoplasm. It is found in the cytoskeleton. The protein resides in the microtubule organizing center. Its subcellular location is the centrosome. Minus-end microtubule-dependent motor protein. Acts as a negative regulator of centrosome separation required to prevent premature centrosome separation during interphase. Required to maintain a centered nucleus to ensure that the spindle is stably oriented at the onset of mitosis. May also act as a negative regulator of amino acid starvation-induced autophagy. This chain is Kinesin-like protein KIF25, found in Homo sapiens (Human).